The chain runs to 76 residues: Exodeoxyribonuclease 7 small subunit (76 aa).

It belongs to the XseB family. In terms of assembly, heterooligomer composed of large and small subunits.

The protein localises to the cytoplasm. It catalyses the reaction Exonucleolytic cleavage in either 5'- to 3'- or 3'- to 5'-direction to yield nucleoside 5'-phosphates.. Its function is as follows. Bidirectionally degrades single-stranded DNA into large acid-insoluble oligonucleotides, which are then degraded further into small acid-soluble oligonucleotides. This Enterococcus faecalis (strain ATCC 700802 / V583) protein is Exodeoxyribonuclease 7 small subunit.